The primary structure comprises 150 residues: Transcriptional regulator MraZ (150 aa).

2 consecutive SpoVT-AbrB domains span residues 7 to 55 (SHAI…PEPE) and 84 to 127 (AALM…SEES).

It belongs to the MraZ family. As to quaternary structure, forms oligomers.

The protein resides in the cytoplasm. Its subcellular location is the nucleoid. In Marinobacter nauticus (strain ATCC 700491 / DSM 11845 / VT8) (Marinobacter aquaeolei), this protein is Transcriptional regulator MraZ.